The sequence spans 240 residues: Biotin--[acetyl-CoA-carboxylase] ligase (240 aa).

Residues 1-176 enclose the BPL/LPL catalytic domain; it reads MLARTDSTNA…AFARWQAQLD (176 aa). Biotin is bound by residues 7-9, glutamine 30, 34-36, and lysine 102; these read STN and RGR.

It belongs to the biotin--protein ligase family.

It catalyses the reaction biotin + L-lysyl-[protein] + ATP = N(6)-biotinyl-L-lysyl-[protein] + AMP + diphosphate + H(+). Functionally, activates biotin to form biotinyl-5'-adenylate and transfers the biotin moiety to biotin-accepting proteins. The sequence is that of Biotin--[acetyl-CoA-carboxylase] ligase (birA) from Paracoccus denitrificans.